The sequence spans 400 residues: Formate-dependent phosphoribosylglycinamide formyltransferase (400 aa).

N(1)-(5-phospho-beta-D-ribosyl)glycinamide-binding positions include 22-23 (EL) and glutamate 82. Residues arginine 115, lysine 156, 161-166 (SSGKGQ), 196-199 (EGFI), and glutamate 204 each bind ATP. The ATP-grasp domain occupies 120–309 (RLAAETLGLP…EFALHARAIL (190 aa)). Residues glutamate 268 and glutamate 280 each contribute to the Mg(2+) site. N(1)-(5-phospho-beta-D-ribosyl)glycinamide-binding positions include aspartate 287, lysine 361, and 368–369 (RR).

It belongs to the PurK/PurT family. As to quaternary structure, homodimer.

The enzyme catalyses N(1)-(5-phospho-beta-D-ribosyl)glycinamide + formate + ATP = N(2)-formyl-N(1)-(5-phospho-beta-D-ribosyl)glycinamide + ADP + phosphate + H(+). It functions in the pathway purine metabolism; IMP biosynthesis via de novo pathway; N(2)-formyl-N(1)-(5-phospho-D-ribosyl)glycinamide from N(1)-(5-phospho-D-ribosyl)glycinamide (formate route): step 1/1. Involved in the de novo purine biosynthesis. Catalyzes the transfer of formate to 5-phospho-ribosyl-glycinamide (GAR), producing 5-phospho-ribosyl-N-formylglycinamide (FGAR). Formate is provided by PurU via hydrolysis of 10-formyl-tetrahydrofolate. The protein is Formate-dependent phosphoribosylglycinamide formyltransferase of Xanthomonas oryzae pv. oryzae (strain KACC10331 / KXO85).